Reading from the N-terminus, the 650-residue chain is Pentatricopeptide repeat-containing protein At1g51965, mitochondrial (650 aa).

Residues M1–Y23 constitute a mitochondrion transit peptide. PPR repeat units lie at residues D132–G169, N170–K200, N202–L236, D237–R267, D269–L303, N304–P338, N339–Y369, T371–G405, E406–T440, D441–P475, D476–P510, D511–P545, D546–P580, and N581–P615.

Belongs to the PPR family. P subfamily.

Its subcellular location is the mitochondrion. This chain is Pentatricopeptide repeat-containing protein At1g51965, mitochondrial, found in Arabidopsis thaliana (Mouse-ear cress).